The following is a 21-amino-acid chain: DYE-linked aldehyde dehydrogenase, gamma chain (21 aa).

In terms of assembly, heterotetramer composed of an alpha, a beta and two gamma chains. Requires [2Fe-2S] cluster as cofactor.

In terms of biological role, active with aldehydes and formate esters as substrates. In Amycolatopsis methanolica, this protein is DYE-linked aldehyde dehydrogenase, gamma chain.